Consider the following 233-residue polypeptide: uncharacterized protein (233 aa).

The N-terminal stretch at 1–23 (MEIKYFLVLLVGFLLVLPSIVNP) is a signal peptide. The interval 42 to 217 (LDVNNPHNPN…HHHHQEASEC (176 aa)) is disordered. The span at 45–64 (NNPHNPNNNPHNPHNPNNNP) shows a compositional bias: low complexity. Over residues 65–211 (HHPHHLHHHH…HPHPHHHHHH (147 aa)) the composition is skewed to basic residues.

Its subcellular location is the secreted. This is an uncharacterized protein from Dictyostelium discoideum (Social amoeba).